A 289-amino-acid polypeptide reads, in one-letter code: ATP synthase subunit a (289 aa).

A run of 6 helical transmembrane segments spans residues 43–63 (AFHV…VLIF), 101–121 (SAVI…MNAV), 160–180 (LSVF…GGFI), 193–213 (LFVQ…TLIA), 232–252 (VFIL…GLGV), and 259–279 (AVFH…LTIV).

This sequence belongs to the ATPase A chain family. F-type ATPases have 2 components, CF(1) - the catalytic core - and CF(0) - the membrane proton channel. CF(1) has five subunits: alpha(3), beta(3), gamma(1), delta(1), epsilon(1). CF(0) has three main subunits: a(1), b(2) and c(9-12). The alpha and beta chains form an alternating ring which encloses part of the gamma chain. CF(1) is attached to CF(0) by a central stalk formed by the gamma and epsilon chains, while a peripheral stalk is formed by the delta and b chains.

It localises to the cell inner membrane. Key component of the proton channel; it plays a direct role in the translocation of protons across the membrane. The chain is ATP synthase subunit a from Pseudomonas savastanoi pv. phaseolicola (strain 1448A / Race 6) (Pseudomonas syringae pv. phaseolicola (strain 1448A / Race 6)).